The sequence spans 192 residues: Protein GrpE (192 aa).

Basic and acidic residues predominate over residues 1–20 (MEERNEQVVEEVKEEVKEAQ). The interval 1-39 (MEERNEQVVEEVKEEVKEAQVEEAVTSEDSEESVEEKSE) is disordered. The span at 25–34 (VTSEDSEESV) shows a compositional bias: acidic residues.

Belongs to the GrpE family. As to quaternary structure, homodimer.

It is found in the cytoplasm. Its function is as follows. Participates actively in the response to hyperosmotic and heat shock by preventing the aggregation of stress-denatured proteins, in association with DnaK and GrpE. It is the nucleotide exchange factor for DnaK and may function as a thermosensor. Unfolded proteins bind initially to DnaJ; upon interaction with the DnaJ-bound protein, DnaK hydrolyzes its bound ATP, resulting in the formation of a stable complex. GrpE releases ADP from DnaK; ATP binding to DnaK triggers the release of the substrate protein, thus completing the reaction cycle. Several rounds of ATP-dependent interactions between DnaJ, DnaK and GrpE are required for fully efficient folding. The protein is Protein GrpE of Bacillus cereus (strain ATCC 10987 / NRS 248).